Consider the following 892-residue polypeptide: Integrator complex subunit 6 (892 aa).

One can recognise a VWFA domain in the interval 3–227 (ILLFLIDTSA…QCLESLVQKV (225 aa)). Residues 630 to 637 (MMIDEADE) carry the Inhibitory loop motif. Disordered regions lie at residues 665–692 (MSPL…GTQG), 711–754 (VGGT…AAPD), and 771–793 (PDHT…EVNE).

This sequence belongs to the Integrator subunit 6 family. As to quaternary structure, component of the Integrator complex, composed of core subunits INTS1, INTS2, INTS3, INTS4, INTS5, INTS6, INTS7, INTS8, INTS9/RC74, INTS10, INTS11/CPSF3L, INTS12, INTS13, INTS14 and INTS15. The core complex associates with protein phosphatase 2A subunits PPP2CA and PPP2R1A, to form the Integrator-PP2A (INTAC) complex.

It is found in the nucleus. Its subcellular location is the chromosome. In terms of biological role, component of the integrator complex, a multiprotein complex that terminates RNA polymerase II (Pol II) transcription in the promoter-proximal region of genes. The integrator complex provides a quality checkpoint during transcription elongation by driving premature transcription termination of transcripts that are unfavorably configured for transcriptional elongation: the complex terminates transcription by (1) catalyzing dephosphorylation of the C-terminal domain (CTD) of Pol II subunit POLR2A/RPB1 and SUPT5H/SPT5, (2) degrading the exiting nascent RNA transcript via endonuclease activity and (3) promoting the release of Pol II from bound DNA. The integrator complex is also involved in terminating the synthesis of non-coding Pol II transcripts, such as enhancer RNAs (eRNAs), small nuclear RNAs (snRNAs), telomerase RNAs and long non-coding RNAs (lncRNAs). Within the integrator complex, INTS6 acts as a molecular adapter that promotes assembly of protein phosphatase 2A (PP2A) subunits to the integrator core complex, promoting recruitment of PP2A to transcription pause-release checkpoint. The sequence is that of Integrator complex subunit 6 (ints6l) from Danio rerio (Zebrafish).